The primary structure comprises 878 residues: Staphylococcal nuclease domain-containing protein 1 (878 aa).

TNase-like domains follow at residues 3 to 142 (QYVS…IWGP) and 167 to 312 (KKLN…IWKN). Serine 316 carries the post-translational modification Phosphoserine. 2 consecutive TNase-like domains span residues 326-464 (KDYS…MWSG) and 493-626 (RKLS…MWHD). The Tudor domain maps to 695-755 (KINVGMNVAA…SSLPDTYTKL (61 aa)).

It localises to the cytoplasm. The protein localises to the cytosol. This Schizosaccharomyces pombe (strain 972 / ATCC 24843) (Fission yeast) protein is Staphylococcal nuclease domain-containing protein 1.